The chain runs to 853 residues: DNA mismatch repair protein MutS (853 aa).

614-621 (GPNMGGKS) contacts ATP.

This sequence belongs to the DNA mismatch repair MutS family.

This protein is involved in the repair of mismatches in DNA. It is possible that it carries out the mismatch recognition step. This protein has a weak ATPase activity. The polypeptide is DNA mismatch repair protein MutS (Escherichia coli O1:K1 / APEC).